The following is a 720-amino-acid chain: Polyribonucleotide nucleotidyltransferase (720 aa).

Residues D487 and D493 each contribute to the Mg(2+) site. One can recognise a KH domain in the interval 554-613 (PRIETFKIPTDKIREVIGTGGKVIREIVEKTGAKVNIEDDGTVKVASSDGEAMKAAIKWI). The S1 motif domain occupies 623 to 691 (GQIYDGTVVK…DRGKTRLSMK (69 aa)). The interval 692–720 (AVDQTTGEDLEAKQKAEGGAEAPREAAGE) is disordered. Basic and acidic residues predominate over residues 701–720 (LEAKQKAEGGAEAPREAAGE).

The protein belongs to the polyribonucleotide nucleotidyltransferase family. Mg(2+) is required as a cofactor.

It is found in the cytoplasm. It catalyses the reaction RNA(n+1) + phosphate = RNA(n) + a ribonucleoside 5'-diphosphate. Involved in mRNA degradation. Catalyzes the phosphorolysis of single-stranded polyribonucleotides processively in the 3'- to 5'-direction. This chain is Polyribonucleotide nucleotidyltransferase, found in Bradyrhizobium sp. (strain BTAi1 / ATCC BAA-1182).